The chain runs to 402 residues: MIIIVIFLMCLKIVLNNIIIWSTLNQTVFLNNIFTINDTYGGLFWNTYYDNNRSNFTYCGIAGNYCSCCGHNISLYNTTNNCSLIIFPNNTEIFNRTYELVYLDKKINYTVKLLKSVDSPTITYNCTNSLITCKNNNGTNVNIYLIINNTIVNDTNGDILNYYWNGNNNFTATCMINNTISSLNETENINCTNPILKYQNYLSTLFYIIIFIVSGLIIGIFISIISVLSIRRKRKKHVEEIESPPPSESNEEDISHDDTTSIHEPSPREPLLPKPYSRYQYNTPIYYMRPSTQPLNPFPLPKPCPPPKPCPPPKPCPPPKPCPPPKPCSPPKPCRPPKPCPPPKPCPPPKPCPPPKPCPPSKPCPSPESYSPPKPLPSIPLLPNIPPLSTQNISLIHVDRII.

An N-terminal signal peptide occupies residues 1–16 (MIIIVIFLMCLKIVLN). The Extracellular segment spans residues 17-204 (NIIIWSTLNQ…ILKYQNYLST (188 aa)). Asparagine 25, asparagine 37, asparagine 52, asparagine 55, asparagine 72, asparagine 77, asparagine 81, asparagine 89, asparagine 95, asparagine 108, asparagine 125, asparagine 137, asparagine 148, asparagine 153, asparagine 169, asparagine 177, asparagine 184, and asparagine 190 each carry an N-linked (GlcNAc...) asparagine; by host glycan. Intrachain disulfides connect cysteine 126/cysteine 191 and cysteine 133/cysteine 174. Residues 205 to 225 (LFYIIIFIVSGLIIGIFISII) form a helical membrane-spanning segment. Residues 226-402 (SVLSIRRKRK…ISLIHVDRII (177 aa)) are Cytoplasmic-facing. A disordered region spans residues 238 to 276 (VEEIESPPPSESNEEDISHDDTTSIHEPSPREPLLPKPY). Over residues 256 to 267 (HDDTTSIHEPSP) the composition is skewed to basic and acidic residues. 11 tandem repeats follow at residues 302–307 (KPCPPP), 308–313 (KPCPPP), 314–319 (KPCPPP), 320–325 (KPCPPP), 326–331 (KPCSPP), 332–337 (KPCRPP), 338–343 (KPCPPP), 344–349 (KPCPPP), 350–355 (KPCPPP), 356–361 (KPCPPS), and 362–367 (KPCPSP). Residues 302-367 (KPCPPPKPCP…CPPSKPCPSP (66 aa)) form an 11 X 6 AA tandem repeats of K-P-C-[PRS]-[P]-[PS] region. A compositionally biased stretch (pro residues) spans 319-386 (PKPCPPPKPC…PSIPLLPNIP (68 aa)). Positions 319–388 (PKPCPPPKPC…IPLLPNIPPL (70 aa)) are disordered.

The protein belongs to the asfivirus CD2 homolog protein family. As to quaternary structure, both glycosylated and nonglycosylated forms interact (via C-terminus) with the host AP-1 complex. Cleaved into two fragments of 63 kDa and 26 kDa containing respectively the glycosylated N-terminus and the nonglycosylated C-terminus. A full-length 89-kDa glycosylated form also exists.

The protein resides in the host cell membrane. It localises to the virion membrane. It is found in the host Golgi apparatus. Its function is as follows. May play an immunosuppressive role by inhibiting lymphocyte proliferation and subsequently facilitating viral replication and generalization of infection. Responsible for viral hemadsorption, which may help viral spread. Increases virus replication in the tick vector at the step of virus uptake or replication in the tick gut. May play a role in the host Golgi reorganization to yield viral factories. May play a role in host cell penetration. The chain is CD2 homolog from Ornithodoros (relapsing fever ticks).